Consider the following 113-residue polypeptide: Endoribonuclease SymE (113 aa).

In terms of domain architecture, SpoVT-AbrB spans 29–74; it reads GRYPDYSRIPAITLKGQWLEVAGFATGTAVDVKVMEGCIVLTAQPP.

Belongs to the SymE family.

The protein localises to the cytoplasm. Its function is as follows. Involved in the degradation and recycling of damaged RNA. It is itself a target for degradation by the ATP-dependent protease Lon. In Escherichia coli O7:K1 (strain IAI39 / ExPEC), this protein is Endoribonuclease SymE.